A 568-amino-acid chain; its full sequence is 2-succinyl-5-enolpyruvyl-6-hydroxy-3-cyclohexene-1-carboxylate synthase (568 aa).

It belongs to the TPP enzyme family. MenD subfamily. As to quaternary structure, homodimer. It depends on Mg(2+) as a cofactor. The cofactor is Mn(2+). Thiamine diphosphate is required as a cofactor.

The enzyme catalyses isochorismate + 2-oxoglutarate + H(+) = 5-enolpyruvoyl-6-hydroxy-2-succinyl-cyclohex-3-ene-1-carboxylate + CO2. It participates in quinol/quinone metabolism; 1,4-dihydroxy-2-naphthoate biosynthesis; 1,4-dihydroxy-2-naphthoate from chorismate: step 2/7. Its pathway is quinol/quinone metabolism; menaquinone biosynthesis. In terms of biological role, catalyzes the thiamine diphosphate-dependent decarboxylation of 2-oxoglutarate and the subsequent addition of the resulting succinic semialdehyde-thiamine pyrophosphate anion to isochorismate to yield 2-succinyl-5-enolpyruvyl-6-hydroxy-3-cyclohexene-1-carboxylate (SEPHCHC). This chain is 2-succinyl-5-enolpyruvyl-6-hydroxy-3-cyclohexene-1-carboxylate synthase, found in Actinobacillus pleuropneumoniae serotype 7 (strain AP76).